The sequence spans 345 residues: Type II methyltransferase M.AplI (345 aa).

The SAM-dependent MTase C5-type domain occupies 25–325 (LVVLDLFAGC…KSVKMTLENK (301 aa)). The active site involves Cys-93.

It belongs to the class I-like SAM-binding methyltransferase superfamily. C5-methyltransferase family.

The enzyme catalyses a 2'-deoxycytidine in DNA + S-adenosyl-L-methionine = a 5-methyl-2'-deoxycytidine in DNA + S-adenosyl-L-homocysteine + H(+). Functionally, a methylase, recognizes the double-stranded sequence 5'-CTGCAG-3', methylates C-4 on both strands, and protects the DNA from cleavage by the AplI endonuclease. In Arthrospira platensis (strain NIES-39 / UTEX 3086 / IAM M-135) (Spirulina platensis), this protein is Type II methyltransferase M.AplI (aplIM).